The primary structure comprises 513 residues: PPE family protein PPE4 (513 aa).

Transmembrane regions (helical) follow at residues 233-253, 277-297, and 309-329; these read IIIA…PLLF, FLLP…PIVL, and LAAA…AVTG. Disordered stretches follow at residues 395–446 and 469–513; these read AAAA…ERGA and LAGD…HDSK.

This sequence belongs to the mycobacterial PPE family.

The protein resides in the cell membrane. Its function is as follows. Important for the siderophore-mediated iron-acquisition function of ESX-3. This Mycobacterium tuberculosis (strain CDC 1551 / Oshkosh) protein is PPE family protein PPE4 (PPE4).